The following is a 359-amino-acid chain: uncharacterized protein (359 aa).

This sequence belongs to the glycosyltransferase group 1 family. Glycosyltransferase 4 subfamily.

This is an uncharacterized protein from Bacillus subtilis (strain 168).